The chain runs to 179 residues: Ribosome maturation factor RimM (179 aa).

The 74-residue stretch at 97 to 170 folds into the PRC barrel domain; the sequence is DGELSWNFFV…LITVELPEGL (74 aa).

It belongs to the RimM family. As to quaternary structure, binds ribosomal protein uS19.

The protein resides in the cytoplasm. An accessory protein needed during the final step in the assembly of 30S ribosomal subunit, possibly for assembly of the head region. Essential for efficient processing of 16S rRNA. May be needed both before and after RbfA during the maturation of 16S rRNA. It has affinity for free ribosomal 30S subunits but not for 70S ribosomes. In Bacteroides thetaiotaomicron (strain ATCC 29148 / DSM 2079 / JCM 5827 / CCUG 10774 / NCTC 10582 / VPI-5482 / E50), this protein is Ribosome maturation factor RimM.